We begin with the raw amino-acid sequence, 264 residues long: Movement protein (264 aa).

Basic residues predominate over residues 210–219 (FRTKPSKRGP). The tract at residues 210–264 (FRTKPSKRGPKNNNNLGKGRSGGRPKPKSFDEVEKEFDNLIEDEAETSVADSDSY) is disordered. Over residues 237–247 (KSFDEVEKEFD) the composition is skewed to basic and acidic residues.

It belongs to the tobamovirus movement protein family. In terms of assembly, binds to host RBCS at the plasmodesmata; this interaction seems required for viral systemic movement. In resistant plants, interacts with host MBP2C at host microtubules; this interaction prevents virus cell to cell movement. In resistant plants, interacts with host resistance (R) protein (e.g. tomato ToMV resistance protein TM-2(2), AC Q71BG9) at the host plasma membrane; this interaction triggers host defense responses leading to programmed cell death.

Its subcellular location is the host cytoplasm. It localises to the host cytoskeleton. The protein resides in the host cell junction. The protein localises to the host plasmodesma. Functionally, transports viral genome to neighboring plant cells directly through plasmosdesmata, without any budding. The movement protein allows efficient cell to cell propagation, by bypassing the host cell wall barrier. Forms a ribonucleoprotein complex with viral RNA. Binds microtubules and modulates microtubule stability. Can bind double-stranded DNA. Triggers host hypersensitive defense reaction in incompatible plants harboring resistance (R) proteins. The protein is Movement protein (MP) of Tomato mosaic virus (strain LII) (ToMV).